We begin with the raw amino-acid sequence, 104 residues long: MGQCRSANAEDAQELSDVERAIETLIKNFHQYSVEGGKETLTPSELRDLVTQQLPHLMPSNCGLEEKIANLGNCNDSKLEFGSFWELIGEAAKSVKLENAVQGS.

Positions 27 to 61 (KNFHQYSVEGGKETLTPSELRDLVTQQLPHLMPSN) constitute an EF-hand domain.

Belongs to the S-100 family. As to quaternary structure, homodimer. Interacts with AGER.

It localises to the cytoplasm. Functionally, modulates P53/TP53 protein levels, and thereby plays a role in the regulation of cell survival and apoptosis. Depending on the context, it can promote cell proliferation or apoptosis. Plays a role in the regulation of cell migration by modulating the levels of MMP2, a matrix protease that is under transcriptional control of P53/TP53. Does not bind calcium. The polypeptide is Protein S100-A14 (S100A14) (Bos taurus (Bovine)).